Consider the following 185-residue polypeptide: MATPWRRALLMILASQVVTLVKCLEDDDVPEEWLLLHVVQGQIGAGNYSYLRLNHEGKIILRMQSLRGDADLYVSDSTPHPSFDDYELQSVTCGQDVVSIPAHFQRPVGIGIYGHPSHHESDFEMRVYYDRTVDQYPFGEAAYFTDPTGASQQQAYAPEEAAQEEESVLWTILISILKLVLEILF.

Residues 1-23 (MATPWRRALLMILASQVVTLVKC) form the signal peptide. An N-linked (GlcNAc...) asparagine glycan is attached at Asn47.

Belongs to the UPF0669 family.

It localises to the secreted. May be involved in induction of apoptosis in CD4(+) T-cells, but not CD8(+) T-cells or hepatocytes. This is UPF0669 protein C6orf120 homolog from Mus musculus (Mouse).